Here is a 322-residue protein sequence, read N- to C-terminus: Major serine/threonine-protein phosphatase PP2A-2 catalytic subunit (322 aa).

Mn(2+) is bound by residues aspartate 70, histidine 72, aspartate 98, and asparagine 130. Histidine 131 functions as the Proton donor in the catalytic mechanism. Histidine 180 and histidine 254 together coordinate Mn(2+). Leucine 322 is subject to Leucine methyl ester.

Belongs to the PPP phosphatase family. PP-2A subfamily. Requires Mn(2+) as cofactor.

It carries out the reaction O-phospho-L-seryl-[protein] + H2O = L-seryl-[protein] + phosphate. The enzyme catalyses O-phospho-L-threonyl-[protein] + H2O = L-threonyl-[protein] + phosphate. In terms of biological role, essential role in cell cycle control. PP2A may be involved in controlling the entry into mitosis, possibly acting as an inhibitor. This is Major serine/threonine-protein phosphatase PP2A-2 catalytic subunit (ppa2) from Schizosaccharomyces pombe (strain 972 / ATCC 24843) (Fission yeast).